Reading from the N-terminus, the 436-residue chain is UPF0597 protein YhaM (436 aa).

It belongs to the UPF0597 family.

This chain is UPF0597 protein YhaM, found in Salmonella dublin (strain CT_02021853).